A 916-amino-acid chain; its full sequence is Probable dipeptidyl-aminopeptidase B (916 aa).

Disordered regions lie at residues 1–35 (MGRTGDLENAEFFPMTRRRSTSGTSSRSSTDSGLS) and 67–86 (DAEADVDEPFLPTSSKKLGS). Over 1-92 (MGRTGDLENA…KLGSGSRTRQ (92 aa)) the chain is Cytoplasmic. The segment covering 21–35 (TSGTSSRSSTDSGLS) has biased composition (low complexity). The helical; Signal-anchor for type II membrane protein transmembrane segment at 93–113 (IFWALVILCLGGWVLALVLFL) threads the bilayer. Over 114 to 916 (THGRASSQTA…VKRSVPAFAH (803 aa)) the chain is Vacuolar. 2 N-linked (GlcNAc...) asparagine glycosylation sites follow: asparagine 349 and asparagine 640. Serine 754 (charge relay system) is an active-site residue. Asparagine 808 and asparagine 813 each carry an N-linked (GlcNAc...) asparagine glycan. Catalysis depends on charge relay system residues aspartate 831 and histidine 864.

This sequence belongs to the peptidase S9B family.

It is found in the vacuole membrane. It catalyses the reaction Release of an N-terminal dipeptide, Xaa-Yaa-|-Zaa-, from a polypeptide, preferentially when Yaa is Pro, provided Zaa is neither Pro nor hydroxyproline.. Its function is as follows. Type IV dipeptidyl-peptidase which removes N-terminal dipeptides sequentially from polypeptides having unsubstituted N-termini provided that the penultimate residue is proline. The chain is Probable dipeptidyl-aminopeptidase B (dapB) from Aspergillus flavus (strain ATCC 200026 / FGSC A1120 / IAM 13836 / NRRL 3357 / JCM 12722 / SRRC 167).